Consider the following 499-residue polypeptide: Glycerol kinase (499 aa).

Residue Thr13 participates in ADP binding. The ATP site is built by Thr13, Thr14, and Ser15. Residue Thr13 coordinates sn-glycerol 3-phosphate. Arg17 provides a ligand contact to ADP. Sn-glycerol 3-phosphate contacts are provided by Arg83, Glu84, Tyr135, and Asp245. Glycerol contacts are provided by Arg83, Glu84, Tyr135, Asp245, and Gln246. Thr267 and Gly310 together coordinate ADP. 4 residues coordinate ATP: Thr267, Gly310, Gln314, and Gly411. The ADP site is built by Gly411 and Asn415.

It belongs to the FGGY kinase family.

The catalysed reaction is glycerol + ATP = sn-glycerol 3-phosphate + ADP + H(+). It functions in the pathway polyol metabolism; glycerol degradation via glycerol kinase pathway; sn-glycerol 3-phosphate from glycerol: step 1/1. With respect to regulation, inhibited by fructose 1,6-bisphosphate (FBP). Its function is as follows. Key enzyme in the regulation of glycerol uptake and metabolism. Catalyzes the phosphorylation of glycerol to yield sn-glycerol 3-phosphate. This is Glycerol kinase from Xanthomonas campestris pv. campestris (strain 8004).